The chain runs to 157 residues: Endoribonuclease YbeY (157 aa).

The Zn(2+) site is built by H114, H118, and H124.

It belongs to the endoribonuclease YbeY family. The cofactor is Zn(2+).

It is found in the cytoplasm. Functionally, single strand-specific metallo-endoribonuclease involved in late-stage 70S ribosome quality control and in maturation of the 3' terminus of the 16S rRNA. This is Endoribonuclease YbeY from Yersinia pseudotuberculosis serotype O:3 (strain YPIII).